The chain runs to 605 residues: Proline--tRNA ligase (605 aa).

This sequence belongs to the class-II aminoacyl-tRNA synthetase family. ProS type 1 subfamily. In terms of assembly, homodimer.

The protein localises to the cytoplasm. The catalysed reaction is tRNA(Pro) + L-proline + ATP = L-prolyl-tRNA(Pro) + AMP + diphosphate. In terms of biological role, catalyzes the attachment of proline to tRNA(Pro) in a two-step reaction: proline is first activated by ATP to form Pro-AMP and then transferred to the acceptor end of tRNA(Pro). As ProRS can inadvertently accommodate and process non-cognate amino acids such as alanine and cysteine, to avoid such errors it has two additional distinct editing activities against alanine. One activity is designated as 'pretransfer' editing and involves the tRNA(Pro)-independent hydrolysis of activated Ala-AMP. The other activity is designated 'posttransfer' editing and involves deacylation of mischarged Ala-tRNA(Pro). The misacylated Cys-tRNA(Pro) is not edited by ProRS. This chain is Proline--tRNA ligase, found in Bifidobacterium adolescentis (strain ATCC 15703 / DSM 20083 / NCTC 11814 / E194a).